The sequence spans 316 residues: Lipoyl synthase (316 aa).

Residues 1 to 19 are compositionally biased toward basic and acidic residues; the sequence is MRDLKIPEQRHPEKAHRPD. Positions 1–31 are disordered; sequence MRDLKIPEQRHPEKAHRPDNAQPKKPSWIRV. The [4Fe-4S] cluster site is built by cysteine 55, cysteine 60, cysteine 66, cysteine 81, cysteine 85, cysteine 88, and serine 295. Residues 67–284 form the Radical SAM core domain; the sequence is WSQGHATMMI…EKAAYGKGFL (218 aa).

Belongs to the radical SAM superfamily. Lipoyl synthase family. It depends on [4Fe-4S] cluster as a cofactor.

It localises to the cytoplasm. The catalysed reaction is [[Fe-S] cluster scaffold protein carrying a second [4Fe-4S](2+) cluster] + N(6)-octanoyl-L-lysyl-[protein] + 2 oxidized [2Fe-2S]-[ferredoxin] + 2 S-adenosyl-L-methionine + 4 H(+) = [[Fe-S] cluster scaffold protein] + N(6)-[(R)-dihydrolipoyl]-L-lysyl-[protein] + 4 Fe(3+) + 2 hydrogen sulfide + 2 5'-deoxyadenosine + 2 L-methionine + 2 reduced [2Fe-2S]-[ferredoxin]. Its pathway is protein modification; protein lipoylation via endogenous pathway; protein N(6)-(lipoyl)lysine from octanoyl-[acyl-carrier-protein]: step 2/2. Its function is as follows. Catalyzes the radical-mediated insertion of two sulfur atoms into the C-6 and C-8 positions of the octanoyl moiety bound to the lipoyl domains of lipoate-dependent enzymes, thereby converting the octanoylated domains into lipoylated derivatives. The chain is Lipoyl synthase from Ruegeria sp. (strain TM1040) (Silicibacter sp.).